The chain runs to 117 residues: Large ribosomal subunit protein bL20 (117 aa).

Belongs to the bacterial ribosomal protein bL20 family.

In terms of biological role, binds directly to 23S ribosomal RNA and is necessary for the in vitro assembly process of the 50S ribosomal subunit. It is not involved in the protein synthesizing functions of that subunit. This chain is Large ribosomal subunit protein bL20, found in Aliivibrio fischeri (strain ATCC 700601 / ES114) (Vibrio fischeri).